The following is a 77-amino-acid chain: Neurexophilin-4 (77 aa).

Positions 1-77 (NCHVEYEKTN…NFQSEHPYFG (77 aa)) are v (Cys-rich).

The protein belongs to the neurexophilin family. Post-translationally, may be proteolytically processed at the boundary between the N-terminal non-conserved and the central conserved domain in neuron-like cells.

Its subcellular location is the secreted. Functionally, may be signaling molecules that resemble neuropeptides and that act by binding to alpha-neurexins and possibly other receptors. The polypeptide is Neurexophilin-4 (NXPH4) (Macaca mulatta (Rhesus macaque)).